The chain runs to 291 residues: Acetyl-coenzyme A carboxylase carboxyl transferase subunit beta (291 aa).

One can recognise a CoA carboxyltransferase N-terminal domain in the interval 34–291 (MWTKCSNCNS…LILHGVNKYE (258 aa)). Cys38, Cys41, Cys57, and Cys60 together coordinate Zn(2+). The C4-type zinc finger occupies 38–60 (CSNCNSMIYYEDLENNKYVCTKC).

It belongs to the AccD/PCCB family. Acetyl-CoA carboxylase is a heterohexamer composed of biotin carboxyl carrier protein (AccB), biotin carboxylase (AccC) and two subunits each of ACCase subunit alpha (AccA) and ACCase subunit beta (AccD). Zn(2+) serves as cofactor.

The protein resides in the cytoplasm. It carries out the reaction N(6)-carboxybiotinyl-L-lysyl-[protein] + acetyl-CoA = N(6)-biotinyl-L-lysyl-[protein] + malonyl-CoA. Its pathway is lipid metabolism; malonyl-CoA biosynthesis; malonyl-CoA from acetyl-CoA: step 1/1. In terms of biological role, component of the acetyl coenzyme A carboxylase (ACC) complex. Biotin carboxylase (BC) catalyzes the carboxylation of biotin on its carrier protein (BCCP) and then the CO(2) group is transferred by the transcarboxylase to acetyl-CoA to form malonyl-CoA. This Clostridium botulinum (strain Alaska E43 / Type E3) protein is Acetyl-coenzyme A carboxylase carboxyl transferase subunit beta.